The following is a 345-amino-acid chain: Transcription factor MYB106 (345 aa).

HTH myb-type domains follow at residues 9 to 61 (KAGL…TNYL) and 62 to 116 (RPDI…KKRL). DNA-binding regions (H-T-H motif) lie at residues 37–61 (WRSLPEKAGLQRCGKSCRLRWTNYL) and 89–112 (WSAIATHLPKRTDNEIKNYWNTHL).

Expressed in trichomes, stems, carpels, petals and stamens.

The protein localises to the nucleus. Functions as a repressor of epidermal cell outgrowth and negatively regulate trichome branch formation. Acts both as a positive and a negative regulator of cellular outgrowth. Promotes both trichome expansion and branch formation. Coordinately with WIN1/SHN1, participates in the regulation of cuticle biosynthesis and wax accumulation in reproductive organs and trichomes. Functions in cuticle nanoridge formation in petals and stamens, and in morphogenesis of petal conical cells and trichomes. May play a role in the regulation of cuticle formation in vegetative organs. The sequence is that of Transcription factor MYB106 from Arabidopsis thaliana (Mouse-ear cress).